The chain runs to 563 residues: Beta-catenin-like protein 1 (563 aa).

N-acetylmethionine is present on Met1. The segment at 1–49 (MDVGELLSYQPNRGTKRPRDDEEEELKMRRRQAGTRERGRYREEEMTVV) is disordered. The Nuclear localization signal motif lies at 16–33 (KRPRDDEEEELKMRRRQA). Basic and acidic residues predominate over residues 34–45 (GTRERGRYREEE). HEAT repeat units lie at residues 79 to 129 (ESSV…VVAT) and 134 to 176 (YHLL…TLHE). Lys91 is modified (N6-acetyllysine). Residues 130-140 (MPDLYHLLVEL) carry the Nuclear export signal (NES) motif. 5 ARM repeats span residues 178-228 (EEGA…MAEF), 229-273 (RPEM…LQDN), 274-323 (DENR…CLML), 325-363 (SNRE…AMIG), and 364-417 (PEGT…LLRN). Phosphoserine is present on Ser389. A coiled-coil region spans residues 476–540 (DIEDEFYLRR…HIIKEYAENI (65 aa)). Ser545 bears the Phosphoserine mark.

Component of the PRP19-CDC5L splicing complex composed of a core complex comprising a homotetramer of PRPF19, CDC5L, PLRG1 and BCAS2, and at least three less stably associated proteins CTNNBL1, CWC15 and HSPA8. Interacts directly with CWC15 and CDC5L in the complex. Interacts with AICDA; the interaction is important for the antibody diversification activity of AICDA. Interacts with PRPF31 (via its NLS). Interacts (via its N-terminal NLS) with KPNA1 and KPNA2.

It localises to the nucleus. In terms of biological role, component of the PRP19-CDC5L complex that forms an integral part of the spliceosome and is required for activating pre-mRNA splicing. Participates in AID/AICDA-mediated somatic hypermutation (SHM) and class-switch recombination (CSR), 2 processes resulting in the production of high-affinity, mutated isotype-switched antibodies. This chain is Beta-catenin-like protein 1 (CTNNBL1), found in Bos taurus (Bovine).